Consider the following 467-residue polypeptide: 26S proteasome regulatory subunit 7 homolog (467 aa).

2 disordered regions span residues 1 to 26 and 108 to 140; these read MPPK…DDKI and GNGE…DEDD. The segment covering 117–134 has biased composition (low complexity); it reads TDNNNSGNSNSNSNQQST. Residues Ser164 and Ser231 each carry the phosphoserine modification. 250–257 is an ATP binding site; sequence GPPGTGKT.

Belongs to the AAA ATPase family. In terms of assembly, interacts with UBR1 and CIC1. Post-translationally, the N-terminus is blocked.

The protein localises to the cytoplasm. Its subcellular location is the nucleus. Functionally, the 26S proteasome is involved in the ATP-dependent degradation of ubiquitinated proteins. The regulatory (or ATPase) complex confers ATP dependency and substrate specificity to the 26S complex. In Saccharomyces cerevisiae (strain ATCC 204508 / S288c) (Baker's yeast), this protein is 26S proteasome regulatory subunit 7 homolog (RPT1).